We begin with the raw amino-acid sequence, 394 residues long: Chorismate synthase (394 aa).

R40 and R46 together coordinate NADP(+). FMN is bound by residues 135 to 137 (RAS), 255 to 256 (QA), G302, 317 to 321 (KPISS), and R343.

It belongs to the chorismate synthase family. As to quaternary structure, homotetramer. It depends on FMNH2 as a cofactor.

The catalysed reaction is 5-O-(1-carboxyvinyl)-3-phosphoshikimate = chorismate + phosphate. The protein operates within metabolic intermediate biosynthesis; chorismate biosynthesis; chorismate from D-erythrose 4-phosphate and phosphoenolpyruvate: step 7/7. Functionally, catalyzes the anti-1,4-elimination of the C-3 phosphate and the C-6 proR hydrogen from 5-enolpyruvylshikimate-3-phosphate (EPSP) to yield chorismate, which is the branch point compound that serves as the starting substrate for the three terminal pathways of aromatic amino acid biosynthesis. This reaction introduces a second double bond into the aromatic ring system. The protein is Chorismate synthase of Parafrankia sp. (strain EAN1pec).